The chain runs to 78 residues: RNA-binding protein Hfq (78 aa).

A Sm domain is found at 10 to 69; the sequence is DPFLNALRKEHVPVSIYLVNGIKLQGHIESFDQYVVLLRNTVTQMVYKHAISTVVPARAV.

It belongs to the Hfq family. Homohexamer.

RNA chaperone that binds small regulatory RNA (sRNAs) and mRNAs to facilitate mRNA translational regulation in response to envelope stress, environmental stress and changes in metabolite concentrations. Also binds with high specificity to tRNAs. This chain is RNA-binding protein Hfq, found in Janthinobacterium sp. (strain Marseille) (Minibacterium massiliensis).